The following is a 397-amino-acid chain: Acetate kinase (397 aa).

Residue Asn-8 participates in Mg(2+) binding. Lys-15 is a binding site for ATP. Arg-92 serves as a coordination point for substrate. The active-site Proton donor/acceptor is the Asp-149. ATP contacts are provided by residues 209-213 (HLGNG), 283-285 (DFR), and 331-335 (GVGEN). Residue Glu-385 participates in Mg(2+) binding.

This sequence belongs to the acetokinase family. Homodimer. The cofactor is Mg(2+). Mn(2+) is required as a cofactor.

It is found in the cytoplasm. The catalysed reaction is acetate + ATP = acetyl phosphate + ADP. The protein operates within metabolic intermediate biosynthesis; acetyl-CoA biosynthesis; acetyl-CoA from acetate: step 1/2. Functionally, catalyzes the formation of acetyl phosphate from acetate and ATP. Can also catalyze the reverse reaction. The chain is Acetate kinase from Corynebacterium glutamicum (strain R).